The chain runs to 342 residues: Inactive chitinase-like protein 2 (342 aa).

Positions 1–19 are cleaved as a signal peptide; the sequence is MKEIVRALEGYGPPKDKAA. Positions 20 to 60 constitute a Chitin-binding type-1 domain; sequence EQCGWQAGGALCPGGLCCSQYGWCANTPEYCGSGCQSQCDG. 7 disulfides stabilise this stretch: Cys-22-Cys-37, Cys-31-Cys-43, Cys-36-Cys-80, Cys-84-Cys-88, Cys-122-Cys-184, Cys-196-Cys-204, and Cys-301-Cys-333.

This sequence belongs to the glycosyl hydrolase 19 family. Chitinase class I subfamily.

Its function is as follows. Inactive chitinase-like protein that does not exhibit hydrolytic activity toward chitin. Binds strongly to chitin and possesses antifungal activity toward the fungal pathogen Altenaria alternata in plate assays. Probably involved in defense against fungal pathogens through a mechanism that only involves carbohydrate binding. The protein is Inactive chitinase-like protein 2 of Hevea brasiliensis (Para rubber tree).